Reading from the N-terminus, the 187-residue chain is NADH-quinone oxidoreductase subunit C 2 (187 aa).

The disordered stretch occupies residues 153-187; it reads YKDKLNPFGAEGPPPTQPDLATRDIPQGRPSTPES.

This sequence belongs to the complex I 30 kDa subunit family. NDH-1 is composed of 14 different subunits. Subunits NuoB, C, D, E, F, and G constitute the peripheral sector of the complex.

It localises to the cell inner membrane. The catalysed reaction is a quinone + NADH + 5 H(+)(in) = a quinol + NAD(+) + 4 H(+)(out). In terms of biological role, NDH-1 shuttles electrons from NADH, via FMN and iron-sulfur (Fe-S) centers, to quinones in the respiratory chain. The immediate electron acceptor for the enzyme in this species is believed to be ubiquinone. Couples the redox reaction to proton translocation (for every two electrons transferred, four hydrogen ions are translocated across the cytoplasmic membrane), and thus conserves the redox energy in a proton gradient. The polypeptide is NADH-quinone oxidoreductase subunit C 2 (Rhizobium etli (strain CIAT 652)).